We begin with the raw amino-acid sequence, 360 residues long: Decorin (360 aa).

Positions 1 to 16 are cleaved as a signal peptide; it reads MKATIIFFLVAQVSWA. Positions 17 to 30 are excised as a propeptide; it reads GPFQQKGLFDFMLE. Residue serine 34 is glycosylated (O-linked (Xyl...) (glycosaminoglycan) serine). 2 disulfide bridges follow: cysteine 55/cysteine 61 and cysteine 59/cysteine 68. LRR repeat units lie at residues 74–94, 95–118, 119–142, 143–163, 164–187, 188–213, 214–234, 235–258, 259–282, 283–305, 306–335, and 336–360; these read EKVPKDLPPDTALLDLQNNKI, TEIKDGDFKNLKNLHTLILINNKI, SKISPGAFAPLVKLERLYLSKNQL, KELPEKMPKTLQELRVHENEI, TKVRKSVFNGLNQMIVVELGTNPL, KSSGIENGAFQGMKKLSYIRIADTNI, TTIPQGLPPSLTELHLDGNKI, TKVDAASLKGLNNLAKLGLSFNSI, SAVDNGSLANTPHLRELHLNNNKL, VKVPGGLADHKYIQVVYLHNNNI, SAIGSNDFCPPGYNTKKASYSGVSLFSNPV, and QYWEIQPSTFRCVYVRAAVQLGNYK. A glycan (N-linked (GlcNAc...) asparagine) is linked at asparagine 212. Residues asparagine 263 and asparagine 304 are each glycosylated (N-linked (GlcNAc...) asparagine). Cysteine 314 and cysteine 347 form a disulfide bridge.

Belongs to the small leucine-rich proteoglycan (SLRP) family. SLRP class I subfamily. In terms of assembly, binds to type I and type II collagen, fibronectin and TGF-beta. Forms a ternary complex with MFAP2 and ELN. Interacts with DPT. In terms of processing, the attached glycosaminoglycan chain can be either chondroitin sulfate or dermatan sulfate depending upon the tissue of origin.

The protein localises to the secreted. It is found in the extracellular space. The protein resides in the extracellular matrix. May affect the rate of fibrils formation. This Ovis aries (Sheep) protein is Decorin (DCN).